The sequence spans 401 residues: Enoyl-[acyl-carrier-protein] reductase [NADH] (401 aa).

Residues 48 to 53 (GSSSGY), 74 to 75 (FE), 111 to 112 (DA), and 139 to 140 (LA) contribute to the NAD(+) site. A substrate-binding site is contributed by Tyr225. Tyr235 functions as the Proton donor in the catalytic mechanism. NAD(+) contacts are provided by residues Lys244 and 273–275 (VVT).

This sequence belongs to the TER reductase family. As to quaternary structure, monomer.

It carries out the reaction a 2,3-saturated acyl-[ACP] + NAD(+) = a (2E)-enoyl-[ACP] + NADH + H(+). Its pathway is lipid metabolism; fatty acid biosynthesis. In terms of biological role, involved in the final reduction of the elongation cycle of fatty acid synthesis (FAS II). Catalyzes the reduction of a carbon-carbon double bond in an enoyl moiety that is covalently linked to an acyl carrier protein (ACP). In Shewanella putrefaciens (strain CN-32 / ATCC BAA-453), this protein is Enoyl-[acyl-carrier-protein] reductase [NADH].